Here is a 256-residue protein sequence, read N- to C-terminus: D-aminoacyl-tRNA deacylase (256 aa).

This sequence belongs to the DtdA deacylase family. As to quaternary structure, monomer. It depends on Zn(2+) as a cofactor.

It catalyses the reaction a D-aminoacyl-tRNA + H2O = a tRNA + a D-alpha-amino acid + H(+). It carries out the reaction glycyl-tRNA(Ala) + H2O = tRNA(Ala) + glycine + H(+). Functionally, D-aminoacyl-tRNA deacylase with broad substrate specificity. By recycling D-aminoacyl-tRNA to D-amino acids and free tRNA molecules, this enzyme counteracts the toxicity associated with the formation of D-aminoacyl-tRNA entities in vivo. In Thermoplasma volcanium (strain ATCC 51530 / DSM 4299 / JCM 9571 / NBRC 15438 / GSS1), this protein is D-aminoacyl-tRNA deacylase.